The following is a 526-amino-acid chain: Histidine ammonia-lyase (526 aa).

The segment at residues 143–145 (ASG) is a cross-link (5-imidazolinone (Ala-Gly)). Ser-144 carries the 2,3-didehydroalanine (Ser) modification.

This sequence belongs to the PAL/histidase family. Post-translationally, contains an active site 4-methylidene-imidazol-5-one (MIO), which is formed autocatalytically by cyclization and dehydration of residues Ala-Ser-Gly.

It is found in the cytoplasm. The catalysed reaction is L-histidine = trans-urocanate + NH4(+). Its pathway is amino-acid degradation; L-histidine degradation into L-glutamate; N-formimidoyl-L-glutamate from L-histidine: step 1/3. The sequence is that of Histidine ammonia-lyase from Aromatoleum aromaticum (strain DSM 19018 / LMG 30748 / EbN1) (Azoarcus sp. (strain EbN1)).